The chain runs to 148 residues: MFRGSTQLNLDSKGRLAIPAKYRNELFANCGGNIVVTADPSRCLLIYPQPVWEPIEKKLSGFSSFNPQIRSLQRLIIGNACDVEMDGSGRILISAPLRQFAGLQKEVVLAGQGEKFELWDMAKWDLEIDTATACKDGDIPPELEGFSL.

SpoVT-AbrB domains lie at 5–51 (STQL…PQPV) and 80–123 (ACDV…DMAK).

It belongs to the MraZ family. Forms oligomers.

Its subcellular location is the cytoplasm. It localises to the nucleoid. This is Transcriptional regulator MraZ from Nitrosomonas eutropha (strain DSM 101675 / C91 / Nm57).